The primary structure comprises 230 residues: Large ribosomal subunit protein uL1c (230 aa).

The protein belongs to the universal ribosomal protein uL1 family. In terms of assembly, part of the 50S ribosomal subunit.

It is found in the plastid. The protein resides in the chloroplast. In terms of biological role, binds directly to 23S rRNA. Might be involved in E site tRNA release (Potential). The sequence is that of Large ribosomal subunit protein uL1c (rpl1) from Phaeodactylum tricornutum (strain CCAP 1055/1).